The following is a 124-amino-acid chain: Fluoride-specific ion channel FluC (124 aa).

4 helical membrane-spanning segments follow: residues 3–23 (IIAIAVGAAIGANLRYSLSIW), 34–54 (YGTLIVNVIGSFAIGFVLVLA), 66–86 (LLIVTGLLGGFTTFSSLSFET), and 100–120 (LYVLSSFGLGIAGVFLGAGVA). The Na(+) site is built by Gly74 and Thr77.

This sequence belongs to the fluoride channel Fluc/FEX (TC 1.A.43) family.

It localises to the cell membrane. It catalyses the reaction fluoride(in) = fluoride(out). With respect to regulation, na(+) is not transported, but it plays an essential structural role and its presence is essential for fluoride channel function. Its function is as follows. Fluoride-specific ion channel. Important for reducing fluoride concentration in the cell, thus reducing its toxicity. This Roseiflexus sp. (strain RS-1) protein is Fluoride-specific ion channel FluC.